Here is a 338-residue protein sequence, read N- to C-terminus: Holliday junction branch migration complex subunit RuvB (338 aa).

A disordered region spans residues 1–22 (MIEADRLIHAEPQGPEERDEQI). Positions 4–187 (ADRLIHAEPQ…FGIPLRLEFY (184 aa)) are large ATPase domain (RuvB-L). ATP-binding positions include Arg-27, Gly-68, Lys-71, Thr-72, Thr-73, 134-136 (EDY), Arg-177, Tyr-187, and Arg-224. Thr-72 is a binding site for Mg(2+). The interval 188 to 258 (NTKDLSSIVS…VADLALDMLD (71 aa)) is small ATPAse domain (RuvB-S). The segment at 261–338 (SEGFDYMDRK…RHFDIIQPEK (78 aa)) is head domain (RuvB-H). 3 residues coordinate DNA: Arg-297, Arg-316, and Arg-321.

It belongs to the RuvB family. Homohexamer. Forms an RuvA(8)-RuvB(12)-Holliday junction (HJ) complex. HJ DNA is sandwiched between 2 RuvA tetramers; dsDNA enters through RuvA and exits via RuvB. An RuvB hexamer assembles on each DNA strand where it exits the tetramer. Each RuvB hexamer is contacted by two RuvA subunits (via domain III) on 2 adjacent RuvB subunits; this complex drives branch migration. In the full resolvosome a probable DNA-RuvA(4)-RuvB(12)-RuvC(2) complex forms which resolves the HJ.

It is found in the cytoplasm. The enzyme catalyses ATP + H2O = ADP + phosphate + H(+). The RuvA-RuvB-RuvC complex processes Holliday junction (HJ) DNA during genetic recombination and DNA repair, while the RuvA-RuvB complex plays an important role in the rescue of blocked DNA replication forks via replication fork reversal (RFR). RuvA specifically binds to HJ cruciform DNA, conferring on it an open structure. The RuvB hexamer acts as an ATP-dependent pump, pulling dsDNA into and through the RuvAB complex. RuvB forms 2 homohexamers on either side of HJ DNA bound by 1 or 2 RuvA tetramers; 4 subunits per hexamer contact DNA at a time. Coordinated motions by a converter formed by DNA-disengaged RuvB subunits stimulates ATP hydrolysis and nucleotide exchange. Immobilization of the converter enables RuvB to convert the ATP-contained energy into a lever motion, pulling 2 nucleotides of DNA out of the RuvA tetramer per ATP hydrolyzed, thus driving DNA branch migration. The RuvB motors rotate together with the DNA substrate, which together with the progressing nucleotide cycle form the mechanistic basis for DNA recombination by continuous HJ branch migration. Branch migration allows RuvC to scan DNA until it finds its consensus sequence, where it cleaves and resolves cruciform DNA. This Shewanella sediminis (strain HAW-EB3) protein is Holliday junction branch migration complex subunit RuvB.